An 87-amino-acid polypeptide reads, in one-letter code: U3-theraphotoxin-Hhn1j (87 aa).

The N-terminal stretch at 1-24 (MVNMKASMFLTFAGLVLLFVVCYA) is a signal peptide. The propeptide occupies 25–52 (SESEEKEFPKEMLSSIFAVDNDFKQEER). Intrachain disulfides connect cysteine 54–cysteine 67, cysteine 61–cysteine 72, and cysteine 66–cysteine 79.

Belongs to the neurotoxin 10 (Hwtx-1) family. 51 (Hntx-8) subfamily. Hntx-8 sub-subfamily. Expressed by the venom gland.

The protein resides in the secreted. In terms of biological role, ion channel inhibitor. The polypeptide is U3-theraphotoxin-Hhn1j (Cyriopagopus hainanus (Chinese bird spider)).